A 321-amino-acid polypeptide reads, in one-letter code: Citrate synthase (321 aa).

Active-site residues include His-248 and Asp-306.

Belongs to the citrate synthase family.

It catalyses the reaction oxaloacetate + acetyl-CoA + H2O = citrate + CoA + H(+). It participates in carbohydrate metabolism; tricarboxylic acid cycle; isocitrate from oxaloacetate: step 1/2. This Bartonella elizabethae (Rochalimaea elizabethae) protein is Citrate synthase (gltA).